Consider the following 207-residue polypeptide: Abscisic acid receptor PYL9 (207 aa).

An START-like region spans residues 31–197 (FPPSTTTATT…NLQMLAAVAE (167 aa)). Abscisate-binding positions include Lys-74, 104 to 109 (ASTSTE), 131 to 137 (RLRNYRS), and Glu-162. A Gate loop motif is present at residues 100-104 (SGLPA). A Latch loop motif is present at residues 130–132 (HRL).

The protein belongs to the PYR/PYL/RCAR abscisic acid intracellular receptor family. As to quaternary structure, homodimer. Interacts with PP2C06. Interacts with PP2C50. Binding to PP2C50 is dependent on the presence of abscisic acid (ABA). Interacts with PP2C30 and PP2C53. Binding to PP2C30 and PP2C53 is dependent on the presence of ABA.

It localises to the cytoplasm. The protein localises to the cytosol. The protein resides in the nucleus. In terms of biological role, involved in abscisic acid (ABA) signaling during seed germination and abiotic stress response. Acts as a positive regulator of ABA-mediated inhibition of seed germination, and tolerance to drought and cold stresses. Inhibits the activity of the protein phosphatases PP2C06 and PP2C09 when activated by abscisic acid (ABA). The protein is Abscisic acid receptor PYL9 of Oryza sativa subsp. japonica (Rice).